The chain runs to 400 residues: uncharacterized protein (400 aa).

Position 36–43 (36–43 (GSINSGKT)) interacts with ATP.

The protein belongs to the archaeal ATPase family.

This is an uncharacterized protein from Methanocaldococcus jannaschii (strain ATCC 43067 / DSM 2661 / JAL-1 / JCM 10045 / NBRC 100440) (Methanococcus jannaschii).